Here is a 341-residue protein sequence, read N- to C-terminus: L-threonine 3-dehydrogenase (341 aa).

C38 provides a ligand contact to Zn(2+). Catalysis depends on charge relay system residues T40 and H43. Zn(2+) contacts are provided by H63, E64, C93, C96, C99, and C107. Residues I175, D195, R200, 262-264 (LGI), and 286-287 (IY) contribute to the NAD(+) site.

Belongs to the zinc-containing alcohol dehydrogenase family. In terms of assembly, homotetramer. Requires Zn(2+) as cofactor.

The protein resides in the cytoplasm. It catalyses the reaction L-threonine + NAD(+) = (2S)-2-amino-3-oxobutanoate + NADH + H(+). The protein operates within amino-acid degradation; L-threonine degradation via oxydo-reductase pathway; glycine from L-threonine: step 1/2. Functionally, catalyzes the NAD(+)-dependent oxidation of L-threonine to 2-amino-3-ketobutyrate. This is L-threonine 3-dehydrogenase from Shewanella loihica (strain ATCC BAA-1088 / PV-4).